The chain runs to 249 residues: Probable transcriptional regulatory protein LBJ_0543 (249 aa).

The protein belongs to the TACO1 family.

The protein resides in the cytoplasm. This chain is Probable transcriptional regulatory protein LBJ_0543, found in Leptospira borgpetersenii serovar Hardjo-bovis (strain JB197).